The chain runs to 308 residues: Olfactory receptor 2T7 (308 aa).

Over 1 to 17 the chain is Extracellular; sequence MPTLSFWVCSATPVSPG. The chain crosses the membrane as a helical span at residues 18-40; that stretch reads FFALILLVFVTSIASNVVKIILI. The Cytoplasmic segment spans residues 41–51; the sequence is HIDSRLHTPMY. Residues 52–74 traverse the membrane as a helical segment; it reads FLLSQLSLRDILYISTIVPKMLV. The Extracellular segment spans residues 75–88; the sequence is DQVMSQRAISFAGC. A disulfide bridge links Cys88 with Cys170. A helical transmembrane segment spans residues 89–109; that stretch reads TAQHFLYLTLAGAEFFLLGLM. Topologically, residues 110–130 are cytoplasmic; that stretch reads SCDRYVAICNPLHYPDLMSRK. The chain crosses the membrane as a helical span at residues 131-151; that stretch reads ICWLIVAAAWLGGSIDGFLLT. At 152-188 the chain is on the extracellular side; that stretch reads PVTMQFPFCASREINHFFCEVPALLKLSCTDTSAYET. Residues 189–209 form a helical membrane-spanning segment; sequence AMYVCCIMMLLIPFSVISGSY. Topologically, residues 210–235 are cytoplasmic; sequence TRILITVYRMSEAEGRRKAVATCSSH. Residues 236–256 traverse the membrane as a helical segment; sequence MVVVSLFYGAAMYTYVLPHSY. The Extracellular segment spans residues 257-262; it reads HTPEQD. The chain crosses the membrane as a helical span at residues 263–283; the sequence is KAVSAFYTILTPMLNPLIYSL. Residues 284-308 are Cytoplasmic-facing; it reads RNKDVTGALQKVVGRCVSSGKVTTF.

It belongs to the G-protein coupled receptor 1 family.

The protein localises to the cell membrane. Its function is as follows. Odorant receptor. This chain is Olfactory receptor 2T7 (OR2T7), found in Homo sapiens (Human).